The primary structure comprises 692 residues: Elongation factor G (692 aa).

One can recognise a tr-type G domain in the interval 8–282 (PNTRNIGIMA…NVVAYLPSPV (275 aa)). GTP is bound by residues 17–24 (AHIDAGKT), 81–85 (DTPGH), and 135–138 (NKMD).

Belongs to the TRAFAC class translation factor GTPase superfamily. Classic translation factor GTPase family. EF-G/EF-2 subfamily.

The protein resides in the cytoplasm. Its function is as follows. Catalyzes the GTP-dependent ribosomal translocation step during translation elongation. During this step, the ribosome changes from the pre-translocational (PRE) to the post-translocational (POST) state as the newly formed A-site-bound peptidyl-tRNA and P-site-bound deacylated tRNA move to the P and E sites, respectively. Catalyzes the coordinated movement of the two tRNA molecules, the mRNA and conformational changes in the ribosome. The protein is Elongation factor G of Brevibacillus brevis (strain 47 / JCM 6285 / NBRC 100599).